The chain runs to 303 residues: N-acetylmuramic acid 6-phosphate etherase (303 aa).

Residues 60–223 enclose the SIS domain; it reads ATASLQAGGR…STGVMVKLGK (164 aa). Glutamate 88 acts as the Proton donor in catalysis. Glutamate 119 is a catalytic residue.

The protein belongs to the GCKR-like family. MurNAc-6-P etherase subfamily. In terms of assembly, homodimer.

It catalyses the reaction N-acetyl-D-muramate 6-phosphate + H2O = N-acetyl-D-glucosamine 6-phosphate + (R)-lactate. It functions in the pathway amino-sugar metabolism; 1,6-anhydro-N-acetylmuramate degradation. It participates in amino-sugar metabolism; N-acetylmuramate degradation. The protein operates within cell wall biogenesis; peptidoglycan recycling. Its function is as follows. Specifically catalyzes the cleavage of the D-lactyl ether substituent of MurNAc 6-phosphate, producing GlcNAc 6-phosphate and D-lactate. Together with AnmK, is also required for the utilization of anhydro-N-acetylmuramic acid (anhMurNAc) either imported from the medium or derived from its own cell wall murein, and thus plays a role in cell wall recycling. The polypeptide is N-acetylmuramic acid 6-phosphate etherase (Pectobacterium atrosepticum (strain SCRI 1043 / ATCC BAA-672) (Erwinia carotovora subsp. atroseptica)).